Here is a 104-residue protein sequence, read N- to C-terminus: Large ribosomal subunit protein bL21 (104 aa).

It belongs to the bacterial ribosomal protein bL21 family. As to quaternary structure, part of the 50S ribosomal subunit. Contacts protein L20.

This protein binds to 23S rRNA in the presence of protein L20. The protein is Large ribosomal subunit protein bL21 of Leptospira interrogans serogroup Icterohaemorrhagiae serovar copenhageni (strain Fiocruz L1-130).